Reading from the N-terminus, the 984-residue chain is Rhoptry neck protein 4 (984 aa).

The first 26 residues, 1–26 (MAIKNTLTGSGLLVLLTLACGTTVQS), serve as a signal peptide directing secretion. The tract at residues 24-300 (VQSSPPTPAP…TPIPASKGIY (277 aa)) is disordered. Polar residues-rich tracts occupy residues 66 to 85 (PQKT…NSKV) and 92 to 105 (SDTT…TSES). An N-linked (GlcNAc...) asparagine glycan is attached at N81. The segment covering 106-117 (PPVPQLGTPPRP) has biased composition (pro residues). Repeat 1 spans residues 129–172 (QPPTAAPRTSRSVDTGSGSDASTEQQAGGQKVVTPIPASKGIYP). Positions 135–156 (PRTSRSVDTGSGSDASTEQQAG) are enriched in polar residues. Basic residues predominate over residues 214–228 (TGRRRAKARNRKRHP). Polar residues predominate over residues 242-285 (QPPTTASRPSNGEGESQPPTAAPRTSRSVDTGSGSDASTEQQAG). Repeat 2 spans residues 258–301 (QPPTAAPRTSRSVDTGSGSDASTEQQAGGQKVVTPIPASKGIYP). N-linked (GlcNAc...) asparagine glycosylation is found at N390 and N780. The interval 882 to 984 (GPTVSDESRR…EESTSKTSEL (103 aa)) is disordered. Basic residues predominate over residues 892 to 901 (MIHPVRHRSR). Residues 902-914 (TAPSSEAASTAAE) show a composition bias toward low complexity. N-linked (GlcNAc...) asparagine glycosylation is present at N925. Polar residues predominate over residues 967 to 984 (LKQSDTLIEESTSKTSEL).

The protein resides in the secreted. It is found in the parasitophorous vacuole membrane. This Toxoplasma gondii protein is Rhoptry neck protein 4 (RON4).